We begin with the raw amino-acid sequence, 520 residues long: Glucose starvation modulator protein 1 (520 aa).

Positions 20-48 (CSFCHSKHLQCSNNRPCKNCVKRNIADQC) form a DNA-binding region, zn(2)-C6 fungal-type. 2 disordered regions span residues 63 to 104 (AKNK…SSGR) and 194 to 213 (PASP…PNEM). A compositionally biased stretch (low complexity) spans 74–85 (SLESSSSPFSPL). The span at 90–104 (INSQSSQPLDPSSGR) shows a compositional bias: polar residues. The 70-residue stretch at 376-445 (DYEKLSHLNS…FKLFKSVAVG (70 aa)) folds into the PAS domain.

It belongs to the ERT1/acuK family.

The protein resides in the nucleus. In terms of biological role, transcription factor which regulates nonfermentable carbon utilization. The sequence is that of Glucose starvation modulator protein 1 (GSM1) from Meyerozyma guilliermondii (strain ATCC 6260 / CBS 566 / DSM 6381 / JCM 1539 / NBRC 10279 / NRRL Y-324) (Yeast).